We begin with the raw amino-acid sequence, 466 residues long: Methylenomycin A resistance protein (466 aa).

The next 14 membrane-spanning stretches (helical) occupy residues 16–36, 56–76, 83–103, 113–133, 146–166, 168–188, 203–223, 234–254, 276–296, 305–325, 337–357, 367–387, 409–429, and 434–454; these read ISVLIVLALGFLMATLDVTVV, WVVDGYILTFASLLLAGGALA, TIYILGLAVFVMASCLCAASI, LIQGIGAALFMPSSLSLLAAS, LWAALVSAASALGPFIGGVLV, LAGWQSIFLINVPIGAAALIS, VNIIGHLLGMMALGFLSYALI, VILVAFTAAVLAFVLFLLREI, FIGFLLNFALFGGMFMLSLFL, FMAGVELLPMMAVFVIGNLLF, LMFVSMAVSCIIALLLFVLIS, VLMSVMNLCTGITVPAMTTVI, IGALVGVAITGVIIHLSATWY, and FAFLMMGAAYSLAALLVWLFL.

This sequence belongs to the major facilitator superfamily. EmrB family.

The protein localises to the cell membrane. Its function is as follows. Resistance to the epoxide antibiotic methylenomycin. The polypeptide is Methylenomycin A resistance protein (mmr) (Bacillus subtilis (strain 168)).